A 123-amino-acid polypeptide reads, in one-letter code: Protein Rev (123 aa).

A Phosphoserine; by host CK2 modification is found at S5. Residues 18–26 (IIKTLYQSN) form a homomultimerization region. Disordered stretches follow at residues 24 to 50 (QSNPYPSPAGTRQARKNRRRRWRARQR) and 79 to 123 (EGLS…GTKE). The Nuclear localization signal and RNA-binding (RRE) signature appears at 34 to 50 (TRQARKNRRRRWRARQR). A compositionally biased stretch (basic residues) spans 36–50 (QARKNRRRRWRARQR). Residues 73 to 84 (FQLPPLEGLSLD) carry the Nuclear export signal and binding to XPO1 motif. S92 bears the Phosphoserine; by host mark. Low complexity predominate over residues 93–105 (GTQQPQGTETGVG).

This sequence belongs to the HIV-1 REV protein family. In terms of assembly, homomultimer; when bound to the RRE. Multimeric assembly is essential for activity and may involve XPO1. Binds to human KPNB1, XPO1, TNPO1, RANBP5 and IPO7. Interacts with the viral Integrase. Interacts with human KHDRBS1. Interacts with human NAP1; this interaction decreases Rev multimerization and stimulates its activity. Interacts with human DEAD-box helicases DDX3 and DDX24; these interactions may serve for viral RNA export to the cytoplasm and packaging, respectively. Interacts with human PSIP1; this interaction may inhibit HIV-1 DNA integration by promoting dissociation of the Integrase-LEDGF/p75 complex. Post-translationally, asymmetrically arginine dimethylated at one site by host PRMT6. Methylation impairs the RNA-binding activity and export of viral RNA from the nucleus to the cytoplasm. Phosphorylated by protein kinase CK2. Presence of, and maybe binding to the N-terminus of the regulatory beta subunit of CK2 is necessary for CK2-mediated Rev's phosphorylation.

It is found in the host nucleus. Its subcellular location is the host nucleolus. The protein resides in the host cytoplasm. Functionally, escorts unspliced or incompletely spliced viral pre-mRNAs (late transcripts) out of the nucleus of infected cells. These pre-mRNAs carry a recognition sequence called Rev responsive element (RRE) located in the env gene, that is not present in fully spliced viral mRNAs (early transcripts). This function is essential since most viral proteins are translated from unspliced or partially spliced pre-mRNAs which cannot exit the nucleus by the pathway used by fully processed cellular mRNAs. Rev itself is translated from a fully spliced mRNA that readily exits the nucleus. Rev's nuclear localization signal (NLS) binds directly to KPNB1/Importin beta-1 without previous binding to KPNA1/Importin alpha-1. KPNB1 binds to the GDP bound form of RAN (Ran-GDP) and targets Rev to the nucleus. In the nucleus, the conversion from Ran-GDP to Ran-GTP dissociates Rev from KPNB1 and allows Rev's binding to the RRE in viral pre-mRNAs. Rev multimerization on the RRE via cooperative assembly exposes its nuclear export signal (NES) to the surface. Rev can then form a complex with XPO1/CRM1 and Ran-GTP, leading to nuclear export of the complex. Conversion from Ran-GTP to Ran-GDP mediates dissociation of the Rev/RRE/XPO1/RAN complex, so that Rev can return to the nucleus for a subsequent round of export. Beside KPNB1, also seems to interact with TNPO1/Transportin-1, RANBP5/IPO5 and IPO7/RANBP7 for nuclear import. The nucleoporin-like HRB/RIP is an essential cofactor that probably indirectly interacts with Rev to release HIV RNAs from the perinuclear region to the cytoplasm. The protein is Protein Rev of Human immunodeficiency virus type 1 group M subtype G (isolate 92NG083) (HIV-1).